The chain runs to 403 residues: Phospholipase A1-II 2 (403 aa).

The Acyl-ester intermediate role is filled by S218. Catalysis depends on charge relay system residues S218, D286, and H323. Positions 381–403 are disordered; it reads GPDGRWVLQDHEPDDDDDDDDDD. The segment covering 392-403 has biased composition (acidic residues); that stretch reads EPDDDDDDDDDD.

Belongs to the AB hydrolase superfamily. Lipase family.

The protein resides in the cytoplasm. In terms of biological role, acylhydrolase that catalyzes the hydrolysis of phospholipids at the sn-1 position. The protein is Phospholipase A1-II 2 of Oryza sativa subsp. indica (Rice).